The following is a 262-amino-acid chain: MIDKSAFIHPTAIVEDGAVIGANVHIGPFCIVGPQVEIGEGTVLKSHVVVNGQTKIGRDNEIYQFASIGEVNQDLKYAGEPTRVEIGDRNRIRESVTIHRGTVQGGGLTKVGSDNLLMINAHVAHDCTVGNRCILANNATLAGHVSVDDFAIIGGMTAVHQFCIIGAHVMVGGCSGVAQDVPPYVIAQGNHATPFGVNIEGLKRRGFSREGLVAIRNAYKLLYRSGKTLDEAKLEIAELAEKHPEVKAFTEFFERSTRGPIR.

This sequence belongs to the transferase hexapeptide repeat family. LpxA subfamily. Homotrimer.

The protein resides in the cytoplasm. The catalysed reaction is a (3R)-hydroxyacyl-[ACP] + UDP-N-acetyl-alpha-D-glucosamine = a UDP-3-O-[(3R)-3-hydroxyacyl]-N-acetyl-alpha-D-glucosamine + holo-[ACP]. Its pathway is glycolipid biosynthesis; lipid IV(A) biosynthesis; lipid IV(A) from (3R)-3-hydroxytetradecanoyl-[acyl-carrier-protein] and UDP-N-acetyl-alpha-D-glucosamine: step 1/6. Involved in the biosynthesis of lipid A, a phosphorylated glycolipid that anchors the lipopolysaccharide to the outer membrane of the cell. This is Acyl-[acyl-carrier-protein]--UDP-N-acetylglucosamine O-acyltransferase from Salmonella schwarzengrund (strain CVM19633).